A 309-amino-acid chain; its full sequence is Tagatose-6-phosphate kinase (309 aa).

The protein belongs to the carbohydrate kinase PfkB family. LacC subfamily.

It catalyses the reaction D-tagatofuranose 6-phosphate + ATP = D-tagatofuranose 1,6-bisphosphate + ADP + H(+). It functions in the pathway carbohydrate metabolism; D-tagatose 6-phosphate degradation; D-glyceraldehyde 3-phosphate and glycerone phosphate from D-tagatose 6-phosphate: step 1/2. In Streptococcus pyogenes serotype M6 (strain ATCC BAA-946 / MGAS10394), this protein is Tagatose-6-phosphate kinase.